Consider the following 266-residue polypeptide: Translation initiation factor 2 subunit alpha (266 aa).

The S1 motif domain maps to 12–83 (GEILIATVKQ…RKGTVDVSLK (72 aa)).

This sequence belongs to the eIF-2-alpha family. Heterotrimer composed of an alpha, a beta and a gamma chain.

Its function is as follows. eIF-2 functions in the early steps of protein synthesis by forming a ternary complex with GTP and initiator tRNA. In Saccharolobus solfataricus (strain ATCC 35092 / DSM 1617 / JCM 11322 / P2) (Sulfolobus solfataricus), this protein is Translation initiation factor 2 subunit alpha.